Reading from the N-terminus, the 479-residue chain is Dynein regulatory complex subunit 4 (479 aa).

Coiled-coil stretches lie at residues 28-93 (RDQL…LADI), 117-170 (RAEA…FNEK), and 210-347 (EVEE…GLKE).

This sequence belongs to the DRC4 family.

It is found in the cytoplasm. Its subcellular location is the cytoskeleton. The protein resides in the flagellum basal body. In terms of biological role, cytoskeletal linker which probably functions in axonemal and non-axonemal dynein regulation. May play a role in the spermatozoa motility. This chain is Dynein regulatory complex subunit 4, found in Drosophila melanogaster (Fruit fly).